The sequence spans 358 residues: Photosystem II protein D1 (358 aa).

3 consecutive transmembrane segments (helical) span residues 28-45 (YVGW…AAAI), 117-132 (HFLI…QWEL), and 141-155 (WICV…AAFA). H117 lines the chlorophyll a pocket. W125 is a pheophytin a binding site. 2 residues coordinate [CaMn4O5] cluster: D169 and E188. The chain crosses the membrane as a helical span at residues 196–217 (FHMIGVAGMFGGSLFSAMHGSL). Chlorophyll a is bound at residue H197. A quinone contacts are provided by residues H214 and 263 to 264 (SF). Position 214 (H214) interacts with Fe cation. H271 is a binding site for Fe cation. The helical transmembrane segment at 273 to 287 (FLAAWPVICIWITSL) threads the bilayer. Residues H331, E332, D341, and A343 each coordinate [CaMn4O5] cluster. Residues 344 to 358 (AAESTPVALIAPAIG) constitute a propeptide that is removed on maturation.

This sequence belongs to the reaction center PufL/M/PsbA/D family. PSII is composed of 1 copy each of membrane proteins PsbA, PsbB, PsbC, PsbD, PsbE, PsbF, PsbH, PsbI, PsbJ, PsbK, PsbL, PsbM, PsbT, PsbX, PsbY, Psb30/Ycf12, peripheral proteins PsbO, CyanoQ (PsbQ), PsbU, PsbV and a large number of cofactors. It forms dimeric complexes. Requires The D1/D2 heterodimer binds P680, chlorophylls that are the primary electron donor of PSII, and subsequent electron acceptors. It shares a non-heme iron and each subunit binds pheophytin, quinone, additional chlorophylls, carotenoids and lipids. D1 provides most of the ligands for the Mn4-Ca-O5 cluster of the oxygen-evolving complex (OEC). There is also a Cl(-1) ion associated with D1 and D2, which is required for oxygen evolution. The PSII complex binds additional chlorophylls, carotenoids and specific lipids. as cofactor. Post-translationally, tyr-160 forms a radical intermediate that is referred to as redox-active TyrZ, YZ or Y-Z. In terms of processing, C-terminally processed by CtpA; processing is essential to allow assembly of the oxygen-evolving complex and thus photosynthetic growth.

The protein localises to the cellular thylakoid membrane. It catalyses the reaction 2 a plastoquinone + 4 hnu + 2 H2O = 2 a plastoquinol + O2. Photosystem II (PSII) is a light-driven water:plastoquinone oxidoreductase that uses light energy to abstract electrons from H(2)O, generating O(2) and a proton gradient subsequently used for ATP formation. It consists of a core antenna complex that captures photons, and an electron transfer chain that converts photonic excitation into a charge separation. The D1/D2 (PsbA/PsbD) reaction center heterodimer binds P680, the primary electron donor of PSII as well as several subsequent electron acceptors. The sequence is that of Photosystem II protein D1 from Prochlorococcus marinus (strain MIT 9303).